Here is a 100-residue protein sequence, read N- to C-terminus: Urease subunit gamma (100 aa).

It belongs to the urease gamma subunit family. In terms of assembly, heterotrimer of UreA (gamma), UreB (beta) and UreC (alpha) subunits. Three heterotrimers associate to form the active enzyme.

The protein localises to the cytoplasm. The enzyme catalyses urea + 2 H2O + H(+) = hydrogencarbonate + 2 NH4(+). It functions in the pathway nitrogen metabolism; urea degradation; CO(2) and NH(3) from urea (urease route): step 1/1. The chain is Urease subunit gamma from Mycobacterium bovis (strain ATCC BAA-935 / AF2122/97).